The primary structure comprises 406 residues: NADH-ubiquinone oxidoreductase 49 kDa subunit (406 aa).

The protein belongs to the complex I 49 kDa subunit family. Complex I is composed of 45 different subunits. Component of the iron-sulfur (IP) fragment of the enzyme.

Its subcellular location is the mitochondrion inner membrane. It catalyses the reaction a ubiquinone + NADH + 5 H(+)(in) = a ubiquinol + NAD(+) + 4 H(+)(out). Functionally, core subunit of the mitochondrial membrane respiratory chain NADH dehydrogenase (Complex I) that is believed to belong to the minimal assembly required for catalysis. Complex I functions in the transfer of electrons from NADH to the respiratory chain. The immediate electron acceptor for the enzyme is believed to be ubiquinone. This chain is NADH-ubiquinone oxidoreductase 49 kDa subunit (nad7), found in Dictyostelium citrinum (Slime mold).